The primary structure comprises 857 residues: Blue light receptor lreA (857 aa).

PAS domains are found at residues 306 to 328, 479 to 542, and 608 to 642; these read IIYV…VGQN, LVEN…TTTD, and LSKS…DLMD. A GATA-type zinc finger spans residues 811–836; the sequence is CAICQTKKTPEWRRGPSGERDLCNSC.

Its function is as follows. Transcription factor that acts as a blue light sensor. Plays crucial roles in fungal growth and asexual development. Involved in conidiophore formation, sclerotium production, and conidial stress tolerance. Promotes conidiation by inducing the expression of brlA and abaA. Positively regulates the fungal pathogenicity towards maize. In blue light conditions, inhibits aflatoxin B1 (AFB1) biosynthesis by down-regulating the expression of key genes such as aflA, aflJ, aflH, aflO and aflK. The protein is Blue light receptor lreA of Aspergillus flavus.